A 136-amino-acid polypeptide reads, in one-letter code: Large ribosomal subunit protein uL16 (136 aa).

It belongs to the universal ribosomal protein uL16 family. Part of the 50S ribosomal subunit.

In terms of biological role, binds 23S rRNA and is also seen to make contacts with the A and possibly P site tRNAs. This Aggregatibacter actinomycetemcomitans (Actinobacillus actinomycetemcomitans) protein is Large ribosomal subunit protein uL16.